A 578-amino-acid chain; its full sequence is Probable lysosomal cobalamin transporter (578 aa).

2 consecutive transmembrane segments (helical) span residues 8–28 and 46–66; these read LIWV…SVFI and IFAI…VALV. A glycan (N-linked (GlcNAc...) asparagine) is linked at asparagine 70. 2 helical membrane-spanning segments follow: residues 95–115 and 145–165; these read VVYY…IPFT and TITF…VPVA. An N-linked (GlcNAc...) asparagine glycan is attached at asparagine 168. 6 helical membrane passes run 188-208, 312-332, 347-367, 375-395, 419-439, and 506-526; these read ALTF…VLYT, LLGG…MLLT, GYIL…VQAA, VIFT…IAIV, LTTA…SMVV, and FFGV…LIVV. The disordered stretch occupies residues 539 to 578; that stretch reads RQMDEDAEEAEEEGLLASTGRRLDTAWQDITGRSNRQRDS. The segment covering 540–552 has biased composition (acidic residues); it reads QMDEDAEEAEEEG.

This sequence belongs to the LIMR family. LMBRD1 subfamily.

It localises to the lysosome membrane. Probable lysosomal cobalamin transporter. Required to export cobalamin from lysosomes allowing its conversion to cofactors. This Aspergillus terreus (strain NIH 2624 / FGSC A1156) protein is Probable lysosomal cobalamin transporter.